The chain runs to 341 residues: UPF0283 membrane protein HD_1769 (341 aa).

A run of 3 helical transmembrane segments spans residues 57 to 77, 86 to 106, and 204 to 224; these read LLAV…QCLI, IDLA…GAII, and ENAI…MIAW.

This sequence belongs to the UPF0283 family.

The protein resides in the cell inner membrane. The sequence is that of UPF0283 membrane protein HD_1769 from Haemophilus ducreyi (strain 35000HP / ATCC 700724).